The following is a 382-amino-acid chain: Phosphatidylglycerol--prolipoprotein diacylglyceryl transferase (382 aa).

The next 3 helical transmembrane spans lie at 18–38, 53–73, and 91–111; these read IQWY…MFVF, FFIF…SFVI, and LAIQ…FNFF. Arg162 provides a ligand contact to a 1,2-diacyl-sn-glycero-3-phospho-(1'-sn-glycerol). The next 4 membrane-spanning stretches (helical) occupy residues 213-233, 243-263, 274-294, and 302-322; these read IPLF…IYFV, GTIG…LENF, ITTS…CQFI, and FWTY…TTLF.

It belongs to the Lgt family.

It is found in the cell membrane. It catalyses the reaction L-cysteinyl-[prolipoprotein] + a 1,2-diacyl-sn-glycero-3-phospho-(1'-sn-glycerol) = an S-1,2-diacyl-sn-glyceryl-L-cysteinyl-[prolipoprotein] + sn-glycerol 1-phosphate + H(+). The protein operates within protein modification; lipoprotein biosynthesis (diacylglyceryl transfer). Functionally, catalyzes the transfer of the diacylglyceryl group from phosphatidylglycerol to the sulfhydryl group of the N-terminal cysteine of a prolipoprotein, the first step in the formation of mature lipoproteins. In Mycoplasma genitalium (strain ATCC 33530 / DSM 19775 / NCTC 10195 / G37) (Mycoplasmoides genitalium), this protein is Phosphatidylglycerol--prolipoprotein diacylglyceryl transferase.